Reading from the N-terminus, the 437-residue chain is Serine hydroxymethyltransferase (437 aa).

(6S)-5,6,7,8-tetrahydrofolate is bound by residues Leu130 and Gly134–Leu136. Lys239 is subject to N6-(pyridoxal phosphate)lysine.

This sequence belongs to the SHMT family. As to quaternary structure, homodimer. The cofactor is pyridoxal 5'-phosphate.

Its subcellular location is the cytoplasm. It catalyses the reaction (6R)-5,10-methylene-5,6,7,8-tetrahydrofolate + glycine + H2O = (6S)-5,6,7,8-tetrahydrofolate + L-serine. Its pathway is one-carbon metabolism; tetrahydrofolate interconversion. It participates in amino-acid biosynthesis; glycine biosynthesis; glycine from L-serine: step 1/1. Functionally, catalyzes the reversible interconversion of serine and glycine with tetrahydrofolate (THF) serving as the one-carbon carrier. This reaction serves as the major source of one-carbon groups required for the biosynthesis of purines, thymidylate, methionine, and other important biomolecules. Also exhibits THF-independent aldolase activity toward beta-hydroxyamino acids, producing glycine and aldehydes, via a retro-aldol mechanism. In Bartonella tribocorum (strain CIP 105476 / IBS 506), this protein is Serine hydroxymethyltransferase.